A 474-amino-acid polypeptide reads, in one-letter code: ABHD16B (474 aa).

Residues 175–295 (VICCEGNAGF…QSWKGLVVRT (121 aa)) enclose the AB hydrolase-1 domain. Catalysis depends on charge relay system residues serine 248, aspartate 323, and histidine 423.

Belongs to the AB hydrolase superfamily. ABHD16 family. Expressed in most tissues, with highest expression found in the testes, skeletal muscle, and brown adipose tissue.

The catalysed reaction is a 1,2-diacyl-sn-glycero-3-phospho-L-serine + H2O = a 2-acyl-sn-glycero-3-phospho-L-serine + a fatty acid + H(+). It catalyses the reaction a 1-acylglycerol + H2O = glycerol + a fatty acid + H(+). The enzyme catalyses 1-(9Z-octadecenoyl)-glycerol + H2O = glycerol + (9Z)-octadecenoate + H(+). Its function is as follows. Hydrolyzes the sn-1 position of glycerophospholipids with high specificity towards phosphatidylserine (PS), PS-PLA1 enzyme. Also hydrolyzes the acyl chain of glycerolipids with a preference for the monoacylglycerol (MAG) 1-acylglycerol, MAG lipase. Plays a regulatory role in cellular lipid homeostasis by modulating genes involved in neutral lipid degradation and in phospholipid synthesis and composition. The polypeptide is ABHD16B (Mus musculus (Mouse)).